Reading from the N-terminus, the 118-residue chain is Large ribosomal subunit protein bL20 (118 aa).

The protein belongs to the bacterial ribosomal protein bL20 family.

Functionally, binds directly to 23S ribosomal RNA and is necessary for the in vitro assembly process of the 50S ribosomal subunit. It is not involved in the protein synthesizing functions of that subunit. The sequence is that of Large ribosomal subunit protein bL20 from Proteus mirabilis (strain HI4320).